We begin with the raw amino-acid sequence, 168 residues long: DNA damage-inducible transcript 3 protein (168 aa).

The interval 10–18 is interaction with TRIB3; the sequence is FETVSSWEL. Residues 10-26 form an N-terminal region; sequence FETVSSWELEAWYEDLQ. 4 positions are modified to phosphoserine; by CK2: Ser-14, Ser-15, Ser-30, and Ser-31. The segment at 34–130 is disordered; sequence IGGTYISSPG…EKEQENERKV (97 aa). Positions 73 to 88 are enriched in low complexity; it reads TSTSQSPRSPDSSQSS. Phosphoserine; by MAPK14 occurs at positions 78 and 81. The 64-residue stretch at 98 to 161 folds into the bZIP domain; that stretch reads QGRTRKRKQS…ETTRRALIDR (64 aa). Residues 100–129 are basic motif; sequence RTRKRKQSGQCAARAGKQRMKEKEQENERK. Residues 118–130 are compositionally biased toward basic and acidic residues; it reads RMKEKEQENERKV. Residues 133–147 are leucine-zipper; sequence LAEENERLKLEIERL.

Belongs to the bZIP family. In terms of assembly, heterodimer. Interacts with TCF7L2/TCF4, EP300/P300, HDAC1, HDAC5 and HDAC6. Interacts with TRIB3 which blocks its association with EP300/P300. Interacts with FOXO3, CEBPB and ATF4. In terms of processing, ubiquitinated, leading to its degradation by the proteasome. Post-translationally, phosphorylation at serine residues by MAPK14 enhances its transcriptional activation activity while phosphorylation at serine residues by CK2 inhibits its transcriptional activation activity.

The protein resides in the cytoplasm. The protein localises to the nucleus. Its function is as follows. Multifunctional transcription factor in ER stress response. Plays an essential role in the response to a wide variety of cell stresses and induces cell cycle arrest and apoptosis in response to ER stress. Plays a dual role both as an inhibitor of CCAAT/enhancer-binding protein (C/EBP) function and as an activator of other genes. Acts as a dominant-negative regulator of C/EBP-induced transcription: dimerizes with members of the C/EBP family, impairs their association with C/EBP binding sites in the promoter regions, and inhibits the expression of C/EBP regulated genes. Positively regulates the transcription of TRIB3, IL6, IL8, IL23, TNFRSF10B/DR5, PPP1R15A/GADD34, BBC3/PUMA, BCL2L11/BIM and ERO1L. Negatively regulates; expression of BCL2 and MYOD1, ATF4-dependent transcriptional activation of asparagine synthetase (ASNS), CEBPA-dependent transcriptional activation of hepcidin (HAMP) and CEBPB-mediated expression of peroxisome proliferator-activated receptor gamma (PPARG). Inhibits the canonical Wnt signaling pathway by binding to TCF7L2/TCF4, impairing its DNA-binding properties and repressing its transcriptional activity. Plays a regulatory role in the inflammatory response through the induction of caspase-11 (CASP4/CASP11) which induces the activation of caspase-1 (CASP1) and both these caspases increase the activation of pro-IL1B to mature IL1B which is involved in the inflammatory response. Acts as a major regulator of postnatal neovascularization through regulation of endothelial nitric oxide synthase (NOS3)-related signaling. In Rattus norvegicus (Rat), this protein is DNA damage-inducible transcript 3 protein (Ddit3).